Consider the following 374-residue polypeptide: Chorismate synthase (374 aa).

Position 55 (Arg55) interacts with NADP(+). Residues 132 to 134, Gly293, 308 to 312, and Arg335 each bind FMN; these read RGS and KPTPS.

The protein belongs to the chorismate synthase family. Requires FMNH2 as cofactor.

The enzyme catalyses 5-O-(1-carboxyvinyl)-3-phosphoshikimate = chorismate + phosphate. The protein operates within metabolic intermediate biosynthesis; chorismate biosynthesis; chorismate from D-erythrose 4-phosphate and phosphoenolpyruvate: step 7/7. In terms of biological role, catalyzes the anti-1,4-elimination of the C-3 phosphate and the C-6 proR hydrogen from 5-enolpyruvylshikimate-3-phosphate (EPSP) to yield chorismate, which is the branch point compound that serves as the starting substrate for the three terminal pathways of aromatic amino acid biosynthesis. This reaction introduces a second double bond into the aromatic ring system. This chain is Chorismate synthase, found in Methanothermobacter thermautotrophicus (strain ATCC 29096 / DSM 1053 / JCM 10044 / NBRC 100330 / Delta H) (Methanobacterium thermoautotrophicum).